A 254-amino-acid polypeptide reads, in one-letter code: Phosphoribosylaminoimidazole-succinocarboxamide synthase (254 aa).

This sequence belongs to the SAICAR synthetase family.

It catalyses the reaction 5-amino-1-(5-phospho-D-ribosyl)imidazole-4-carboxylate + L-aspartate + ATP = (2S)-2-[5-amino-1-(5-phospho-beta-D-ribosyl)imidazole-4-carboxamido]succinate + ADP + phosphate + 2 H(+). Its pathway is purine metabolism; IMP biosynthesis via de novo pathway; 5-amino-1-(5-phospho-D-ribosyl)imidazole-4-carboxamide from 5-amino-1-(5-phospho-D-ribosyl)imidazole-4-carboxylate: step 1/2. This Rhodospirillum centenum (strain ATCC 51521 / SW) protein is Phosphoribosylaminoimidazole-succinocarboxamide synthase.